Here is a 157-residue protein sequence, read N- to C-terminus: S-ribosylhomocysteine lyase (157 aa).

Positions 53, 57, and 124 each coordinate Fe cation.

This sequence belongs to the LuxS family. Homodimer. The cofactor is Fe cation.

It catalyses the reaction S-(5-deoxy-D-ribos-5-yl)-L-homocysteine = (S)-4,5-dihydroxypentane-2,3-dione + L-homocysteine. Involved in the synthesis of autoinducer 2 (AI-2) which is secreted by bacteria and is used to communicate both the cell density and the metabolic potential of the environment. The regulation of gene expression in response to changes in cell density is called quorum sensing. Catalyzes the transformation of S-ribosylhomocysteine (RHC) to homocysteine (HC) and 4,5-dihydroxy-2,3-pentadione (DPD). This is S-ribosylhomocysteine lyase from Borrelia garinii subsp. bavariensis (strain ATCC BAA-2496 / DSM 23469 / PBi) (Borreliella bavariensis).